The chain runs to 609 residues: Glutamine--fructose-6-phosphate aminotransferase [isomerizing] (609 aa).

Cys-2 functions as the Nucleophile; for GATase activity in the catalytic mechanism. A Glutamine amidotransferase type-2 domain is found at Cys-2–Arg-218. SIS domains are found at residues Ala-286–Met-426 and Leu-458–Pro-599. Lys-604 acts as the For Fru-6P isomerization activity in catalysis.

As to quaternary structure, homodimer.

It is found in the cytoplasm. It carries out the reaction D-fructose 6-phosphate + L-glutamine = D-glucosamine 6-phosphate + L-glutamate. Functionally, catalyzes the first step in hexosamine metabolism, converting fructose-6P into glucosamine-6P using glutamine as a nitrogen source. In Shewanella oneidensis (strain ATCC 700550 / JCM 31522 / CIP 106686 / LMG 19005 / NCIMB 14063 / MR-1), this protein is Glutamine--fructose-6-phosphate aminotransferase [isomerizing].